A 485-amino-acid chain; its full sequence is Cysteine--tRNA ligase (485 aa).

Cysteine 27 provides a ligand contact to Zn(2+). A 'HIGH' region motif is present at residues 29-39 (ITAYDLCHIGH). Zn(2+)-binding residues include cysteine 208, histidine 233, and glutamate 237. Residues 265–269 (KMSKS) carry the 'KMSKS' region motif. Position 268 (lysine 268) interacts with ATP.

Belongs to the class-I aminoacyl-tRNA synthetase family. In terms of assembly, monomer. Zn(2+) is required as a cofactor.

The protein resides in the cytoplasm. It catalyses the reaction tRNA(Cys) + L-cysteine + ATP = L-cysteinyl-tRNA(Cys) + AMP + diphosphate. This is Cysteine--tRNA ligase from Solidesulfovibrio magneticus (strain ATCC 700980 / DSM 13731 / RS-1) (Desulfovibrio magneticus).